The primary structure comprises 285 residues: Probable endonuclease 4 (285 aa).

His69, His109, Glu145, Asp179, His182, His216, Asp229, His231, and Glu261 together coordinate Zn(2+).

This sequence belongs to the AP endonuclease 2 family. Zn(2+) is required as a cofactor.

It carries out the reaction Endonucleolytic cleavage to 5'-phosphooligonucleotide end-products.. Endonuclease IV plays a role in DNA repair. It cleaves phosphodiester bonds at apurinic or apyrimidinic (AP) sites, generating a 3'-hydroxyl group and a 5'-terminal sugar phosphate. In Shigella sonnei (strain Ss046), this protein is Probable endonuclease 4.